Consider the following 347-residue polypeptide: Ribosomal RNA large subunit methyltransferase M (347 aa).

Residues Ser184, 217-220, Asp236, Asp256, and Asp272 contribute to the S-adenosyl-L-methionine site; that span reads APGG. The active-site Proton acceptor is the Lys301.

It belongs to the class I-like SAM-binding methyltransferase superfamily. RNA methyltransferase RlmE family. RlmM subfamily. As to quaternary structure, monomer.

The protein resides in the cytoplasm. The enzyme catalyses cytidine(2498) in 23S rRNA + S-adenosyl-L-methionine = 2'-O-methylcytidine(2498) in 23S rRNA + S-adenosyl-L-homocysteine + H(+). Functionally, catalyzes the 2'-O-methylation at nucleotide C2498 in 23S rRNA. The protein is Ribosomal RNA large subunit methyltransferase M of Xanthomonas oryzae pv. oryzae (strain PXO99A).